The chain runs to 201 residues: MTTIASLVLAYLLGSVPFAVLVSLGMGLADPRSYGSGNPGATNVLRSGNKLAALLTLLGDAAKGWLAVWLAQTYGASFGLAAPEIAMVGLAVFIGHLWPVFLAFRGGKGVATALGVLLAVNPWLALIAAAVWLAVALLTRYSSLAAMVSAVATAVAAWFIEPGVYAGLTIVIALLLVRRHKQNILNLVSGTESRIGGKKKS.

4 consecutive transmembrane segments (helical) span residues 4–24 (IASLVLAYLLGSVPFAVLVSL), 84–104 (EIAMVGLAVFIGHLWPVFLAF), 116–136 (VLLAVNPWLALIAAAVWLAVA), and 157–177 (AWFIEPGVYAGLTIVIALLLV).

Belongs to the PlsY family. As to quaternary structure, probably interacts with PlsX.

The protein localises to the cell inner membrane. It carries out the reaction an acyl phosphate + sn-glycerol 3-phosphate = a 1-acyl-sn-glycero-3-phosphate + phosphate. The protein operates within lipid metabolism; phospholipid metabolism. Catalyzes the transfer of an acyl group from acyl-phosphate (acyl-PO(4)) to glycerol-3-phosphate (G3P) to form lysophosphatidic acid (LPA). This enzyme utilizes acyl-phosphate as fatty acyl donor, but not acyl-CoA or acyl-ACP. In Laribacter hongkongensis (strain HLHK9), this protein is Glycerol-3-phosphate acyltransferase.